The primary structure comprises 455 residues: L-serine dehydratase (455 aa).

Belongs to the iron-sulfur dependent L-serine dehydratase family. The cofactor is [4Fe-4S] cluster.

The enzyme catalyses L-serine = pyruvate + NH4(+). Its pathway is carbohydrate biosynthesis; gluconeogenesis. The protein is L-serine dehydratase (sdaA) of Helicobacter pylori (strain ATCC 700392 / 26695) (Campylobacter pylori).